A 280-amino-acid polypeptide reads, in one-letter code: MSLIREIAGGPYALAAGPDGAMWVTLVHDGAIARVGADGAVDRFPVADGSRPSLISAGPDGALWFTRNGDDRIGRLTTAGELTEFPLSEGSAPFGICAGADGALWFTEMGSGGIGRITVDGETSGWASVGGTPSMITRGPDDAVWFTLNQGNAIGRLHPRDGVTMRELPTRGAGPVGITATHDDAIWFTEILADKLGRIPLDGALQEIDLPGKPHAVVADPSGGVWVSLWGADRLARVSADGDIETFDLPPGSEPHGLAFGPDGGLWVALESGFVLRMPD.

Histidine 215 serves as a coordination point for substrate. Glutamate 254 is a binding site for Mg(2+). Histidine 256 functions as the Proton acceptor in the catalytic mechanism. Glutamate 271 is a binding site for Mg(2+).

Belongs to the Vgb family. Monomer. Mg(2+) is required as a cofactor.

In terms of biological role, inactivates the type B streptogramin antibiotics by linearizing the lactone ring at the ester linkage, generating a free phenylglycine carboxylate and converting the threonyl moiety into 2-amino-butenoic acid. The chain is Virginiamycin B lyase from Mycobacterium sp. (strain JLS).